The primary structure comprises 269 residues: Shikimate dehydrogenase (NADP(+)) (269 aa).

Shikimate is bound by residues serine 14 to serine 16 and threonine 61. The active-site Proton acceptor is the lysine 65. An NADP(+)-binding site is contributed by glutamate 77. Shikimate is bound by residues asparagine 86 and aspartate 102. Residues glycine 126 to alanine 130, asparagine 149 to lysine 154, and methionine 213 each bind NADP(+). Tyrosine 215 serves as a coordination point for shikimate. Glycine 238 contributes to the NADP(+) binding site.

This sequence belongs to the shikimate dehydrogenase family. Homodimer.

The enzyme catalyses shikimate + NADP(+) = 3-dehydroshikimate + NADPH + H(+). The protein operates within metabolic intermediate biosynthesis; chorismate biosynthesis; chorismate from D-erythrose 4-phosphate and phosphoenolpyruvate: step 4/7. Involved in the biosynthesis of the chorismate, which leads to the biosynthesis of aromatic amino acids. Catalyzes the reversible NADPH linked reduction of 3-dehydroshikimate (DHSA) to yield shikimate (SA). This is Shikimate dehydrogenase (NADP(+)) from Actinobacillus succinogenes (strain ATCC 55618 / DSM 22257 / CCUG 43843 / 130Z).